The sequence spans 553 residues: MAFSVQMPALGESVTEGTVTRWLKQEGDTVELDEPLVEVSTDKVDTEIPSPAAGVLTKIIAQEDDTVEVGGELAVIGDAKDAGEAAAPAPEKVPAAQPESKPAPEPPPVQPTSGAPAGGDAKPVLMPELGESVTEGTVIRWLKKIGDSVQVDEPLVEVSTDKVDTEIPSPVAGVLVSISADEDATVPVGGELARIGVAADIGAAPAPKPAPKPVPEPAPTPKAEPAPSPPAAQPAGAAEGAPYVTPLVRKLASENNIDLAGVTGTGVGGRIRKQDVLAAAEQKKRAKAPAPAAQAAAAPAPKAPPAPAPALAHLRGTTQKASRIRQITANKTRESLQATAQLTQTHEVDMTKIVGLRARAKAAFAEREGVNLTFLPFFAKAVIDALKIHPNINASYNEDTKEITYYDAEHLGFAVDTEQGLLSPVIHDAGDLSLAGLARAIADIAARARSGNLKPDELSGGTFTITNIGSQGALFDTPILVPPQAAMLGTGAIVKRPRVVVDASGNESIGVRSVCYLPLTYDHRLIDGADAGRFLTTIKHRLEEGAFEADLGL.

One can recognise a Lipoyl-binding 1 domain in the interval 2–77 (AFSVQMPALG…EVGGELAVIG (76 aa)). The residue at position 43 (lysine 43) is an N6-lipoyllysine. The disordered stretch occupies residues 81-125 (DAGEAAAPAPEKVPAAQPESKPAPEPPPVQPTSGAPAGGDAKPVL). The span at 84-100 (EAAAPAPEKVPAAQPES) shows a compositional bias: low complexity. A compositionally biased stretch (pro residues) spans 101 to 110 (KPAPEPPPVQ). One can recognise a Lipoyl-binding 2 domain in the interval 121–196 (AKPVLMPELG…PVGGELARIG (76 aa)). The residue at position 162 (lysine 162) is an N6-lipoyllysine. Disordered stretches follow at residues 204-238 (APAP…AGAA) and 278-321 (AAAE…TQKA). Pro residues predominate over residues 206 to 232 (APKPAPKPVPEPAPTPKAEPAPSPPAA). The Peripheral subunit-binding (PSBD) domain occupies 243–280 (YVTPLVRKLASENNIDLAGVTGTGVGGRIRKQDVLAAA). The segment covering 288-300 (APAPAAQAAAAPA) has biased composition (low complexity). Catalysis depends on residues histidine 523 and aspartate 527.

The protein belongs to the 2-oxoacid dehydrogenase family. Forms a 24-polypeptide structural core with octahedral symmetry. Part of the PDH complex, consisting of multiple copies of AceE (E1), DlaT (E2) and Lpd (E3). The cofactor is (R)-lipoate.

It catalyses the reaction N(6)-[(R)-dihydrolipoyl]-L-lysyl-[protein] + acetyl-CoA = N(6)-[(R)-S(8)-acetyldihydrolipoyl]-L-lysyl-[protein] + CoA. In terms of biological role, component of the pyruvate dehydrogenase (PDH) complex, that catalyzes the overall conversion of pyruvate to acetyl-CoA and CO(2). This chain is Dihydrolipoyllysine-residue acetyltransferase component of pyruvate dehydrogenase complex (dlaT), found in Mycobacterium bovis (strain ATCC BAA-935 / AF2122/97).